The sequence spans 877 residues: Transcriptional corepressor SEUSS (877 aa).

Disordered stretches follow at residues 1 to 42 (MVPS…VSPR) and 272 to 295 (LKSM…PLRP). The span at 272 to 292 (LKSMPQQRPQLPQQFQQQNLP) shows a compositional bias: low complexity. Residues 321-563 (PEDNNIEFWR…ETRTGPIESL (243 aa)) form a dimerization region. The Nuclear localization signal signature appears at 330–344 (RKFVAEYFAPNAKKR). 3 disordered regions span residues 560–599 (IESL…QQQQ), 612–633 (QQTV…LMQG), and 666–753 (GRHQ…NESS). A coiled-coil region spans residues 582–618 (QQASDQLRQQQQQQQQQQQQQQQQQQQQQQQQTVSQN). The segment covering 590-599 (QQQQQQQQQQ) has biased composition (low complexity). Residues 614 to 633 (TVSQNTNSDQSSRQVALMQG) show a composition bias toward polar residues. 2 stretches are compositionally biased toward low complexity: residues 688 to 703 (QSPS…SSQQ) and 711 to 725 (QSPT…PSQN). Over residues 726-741 (GIPSVNHMGSTNSPAM) the composition is skewed to polar residues.

It belongs to the adn1/SEU family. Forms a corepressor complex with LUG; LUG is the transcription repressor subunit and SEU the specific DNA-binding adapter. Interacts with AGL24-AP1 and SVP-AP1 dimers when complexed to SEU. Interacts with AP1/AGL7 and SEP3/AGL9. Binds to LUH. In terms of tissue distribution, expressed in root, leaves, seedlings, vegetative and reproductive shoot apical meristems, seeds, floral meristems and all floral organs.

The protein resides in the nucleus. It is found in the nucleoplasm. Functionally, DNA-binding adapter subunit of the SEU-LUG transcriptional corepressor of the C class floral homeotic gene AGAMOUS during the early stages of floral meristem development. Is part of the A class cadastral complex that define the boundaries between the A and C class homeotic genes expression and function. Interacts together with APETALA2 and LEUNIG to repress AGAMOUS expression. In association with LUG, regulates petal shape through AGAMOUS-independent mechanisms. Controls cell division during petal development and enable the proper patterning of petal blade vasculature. Required for the proper elaboration of petal polarity along the adaxial/abaxial axis. May act through direct or indirect regulation of PHABULOSA and YAB1 and thus regulate cellular proliferation within the developing petal blade. In association with AINTEGUMENTA (ANT), coordinates patterning cues and cellular proliferation along the three positional axes of the developing gynoecium. Required for the development of the medial ridge and subsequent ovule initiation. The polypeptide is Transcriptional corepressor SEUSS (SEU) (Arabidopsis thaliana (Mouse-ear cress)).